The following is a 310-amino-acid chain: UDP-N-acetylenolpyruvoylglucosamine reductase (310 aa).

Residues 30–200 enclose the FAD-binding PCMH-type domain; sequence RVGGPAQWLA…VAAEFQLEPG (171 aa). Arg-179 is an active-site residue. The Proton donor role is filled by Ser-230. Glu-300 is an active-site residue.

Belongs to the MurB family. The cofactor is FAD.

It localises to the cytoplasm. It catalyses the reaction UDP-N-acetyl-alpha-D-muramate + NADP(+) = UDP-N-acetyl-3-O-(1-carboxyvinyl)-alpha-D-glucosamine + NADPH + H(+). Its pathway is cell wall biogenesis; peptidoglycan biosynthesis. Functionally, cell wall formation. This chain is UDP-N-acetylenolpyruvoylglucosamine reductase, found in Synechococcus sp. (strain WH7803).